A 226-amino-acid chain; its full sequence is Phosphoribosylformylglycinamidine synthase subunit PurQ (226 aa).

The region spanning 3–226 (RVAVIRFPGT…FESLVEWCRS (224 aa)) is the Glutamine amidotransferase type-1 domain. The Nucleophile role is filled by Cys-86. Residues His-199 and Glu-201 contribute to the active site.

Part of the FGAM synthase complex composed of 1 PurL, 1 PurQ and 2 PurS subunits.

It is found in the cytoplasm. It carries out the reaction N(2)-formyl-N(1)-(5-phospho-beta-D-ribosyl)glycinamide + L-glutamine + ATP + H2O = 2-formamido-N(1)-(5-O-phospho-beta-D-ribosyl)acetamidine + L-glutamate + ADP + phosphate + H(+). It catalyses the reaction L-glutamine + H2O = L-glutamate + NH4(+). It participates in purine metabolism; IMP biosynthesis via de novo pathway; 5-amino-1-(5-phospho-D-ribosyl)imidazole from N(2)-formyl-N(1)-(5-phospho-D-ribosyl)glycinamide: step 1/2. Its function is as follows. Part of the phosphoribosylformylglycinamidine synthase complex involved in the purines biosynthetic pathway. Catalyzes the ATP-dependent conversion of formylglycinamide ribonucleotide (FGAR) and glutamine to yield formylglycinamidine ribonucleotide (FGAM) and glutamate. The FGAM synthase complex is composed of three subunits. PurQ produces an ammonia molecule by converting glutamine to glutamate. PurL transfers the ammonia molecule to FGAR to form FGAM in an ATP-dependent manner. PurS interacts with PurQ and PurL and is thought to assist in the transfer of the ammonia molecule from PurQ to PurL. This chain is Phosphoribosylformylglycinamidine synthase subunit PurQ, found in Methanopyrus kandleri (strain AV19 / DSM 6324 / JCM 9639 / NBRC 100938).